The primary structure comprises 330 residues: tRNA-modifying protein YgfZ (330 aa).

2 residues coordinate folate: Trp-28 and Trp-190.

Belongs to the tRNA-modifying YgfZ family.

It localises to the cytoplasm. Its function is as follows. Folate-binding protein involved in regulating the level of ATP-DnaA and in the modification of some tRNAs. It is probably a key factor in regulatory networks that act via tRNA modification, such as initiation of chromosomal replication. This Yersinia pseudotuberculosis serotype O:1b (strain IP 31758) protein is tRNA-modifying protein YgfZ.